Reading from the N-terminus, the 440-residue chain is NADH-quinone oxidoreductase subunit D (440 aa).

This sequence belongs to the complex I 49 kDa subunit family. In terms of assembly, NDH-1 is composed of 14 different subunits. Subunits NuoB, C, D, E, F, and G constitute the peripheral sector of the complex.

It is found in the cell membrane. It carries out the reaction a quinone + NADH + 5 H(+)(in) = a quinol + NAD(+) + 4 H(+)(out). Functionally, NDH-1 shuttles electrons from NADH, via FMN and iron-sulfur (Fe-S) centers, to quinones in the respiratory chain. The immediate electron acceptor for the enzyme in this species is believed to be a menaquinone. Couples the redox reaction to proton translocation (for every two electrons transferred, four hydrogen ions are translocated across the cytoplasmic membrane), and thus conserves the redox energy in a proton gradient. The polypeptide is NADH-quinone oxidoreductase subunit D (Mycobacterium bovis (strain ATCC BAA-935 / AF2122/97)).